Here is a 292-residue protein sequence, read N- to C-terminus: ATP synthase gamma chain (292 aa).

The protein belongs to the ATPase gamma chain family. In terms of assembly, F-type ATPases have 2 components, CF(1) - the catalytic core - and CF(0) - the membrane proton channel. CF(1) has five subunits: alpha(3), beta(3), gamma(1), delta(1), epsilon(1). CF(0) has three main subunits: a, b and c.

The protein localises to the cell membrane. In terms of biological role, produces ATP from ADP in the presence of a proton gradient across the membrane. The gamma chain is believed to be important in regulating ATPase activity and the flow of protons through the CF(0) complex. The polypeptide is ATP synthase gamma chain (Prosthecochloris aestuarii (strain DSM 271 / SK 413)).